Reading from the N-terminus, the 211-residue chain is Protein TMA23 (211 aa).

Positions 115–211 (ASFVVSSASS…SARRDRKEHI (97 aa)) are disordered. Residues 116–125 (SFVVSSASSS) show a composition bias toward low complexity. 3 stretches are compositionally biased toward basic residues: residues 140–149 (VKRKKLKKDK), 158–176 (KKKK…KKSK), and 185–197 (SKHK…KKHK). A compositionally biased stretch (basic and acidic residues) spans 198 to 211 (KEESSARRDRKEHI).

Forms homooligomers. Associates with ribosomal complexes.

It localises to the nucleus. It is found in the nucleolus. Functionally, trans-acting factors of the ribosome biogenesis process. The protein is Protein TMA23 (TMA23) of Saccharomyces cerevisiae (strain ATCC 204508 / S288c) (Baker's yeast).